The chain runs to 524 residues: Acetyl-CoA decarbonylase/synthase complex subunit beta (524 aa).

The [Ni-Fe-S] cluster site is built by Cys-212, Cys-215, Cys-301, and Cys-303. The tract at residues 436-466 (WVEEEEEEAEEVAEEAAAEAAPAAQPAQAAQ) is disordered. Acidic residues predominate over residues 437 to 452 (VEEEEEEAEEVAEEAA). Low complexity predominate over residues 453 to 466 (AEAAPAAQPAQAAQ).

The protein belongs to the CdhC family. As to quaternary structure, monomer. The ACDS complex is made up of alpha, epsilon, beta, gamma and delta chains with a probable stoichiometry of (alpha(2)epsilon(2))(4)-beta(8)-(gamma(1)delta(1))(8). The cofactor is [Ni-Fe-S] cluster.

The enzyme catalyses Co(I)-[corrinoid Fe-S protein] + acetyl-CoA + H(+) = methyl-Co(III)-[corrinoid Fe-S protein] + CO + CoA. In terms of biological role, part of a complex that catalyzes the reversible cleavage of acetyl-CoA, allowing autotrophic growth from CO(2). The alpha-epsilon complex generates CO from CO(2), while the beta subunit (this protein) combines the CO with CoA and a methyl group to form acetyl-CoA. The methyl group, which is incorporated into acetyl-CoA, is transferred to the beta subunit by a corrinoid iron-sulfur protein (the gamma-delta complex). In Archaeoglobus fulgidus (strain ATCC 49558 / DSM 4304 / JCM 9628 / NBRC 100126 / VC-16), this protein is Acetyl-CoA decarbonylase/synthase complex subunit beta.